The following is a 226-amino-acid chain: Lipoprotein-releasing system ATP-binding protein LolD (226 aa).

The ABC transporter domain occupies 5-226 (LKATNINKIY…LLRNGHWENY (222 aa)). ATP is bound at residue 41–48 (GTSGSGKS).

This sequence belongs to the ABC transporter superfamily. Lipoprotein translocase (TC 3.A.1.125) family. As to quaternary structure, the complex is composed of two ATP-binding proteins (LolD) and two transmembrane proteins (LolC and LolE).

It localises to the cell inner membrane. Functionally, part of the ABC transporter complex LolCDE involved in the translocation of mature outer membrane-directed lipoproteins, from the inner membrane to the periplasmic chaperone, LolA. Responsible for the formation of the LolA-lipoprotein complex in an ATP-dependent manner. In Psychrobacter arcticus (strain DSM 17307 / VKM B-2377 / 273-4), this protein is Lipoprotein-releasing system ATP-binding protein LolD.